Here is a 291-residue protein sequence, read N- to C-terminus: MLGRRSVSLLRGLTELPVSSRAHTALRALSVPQTRRNVATKPNYEGHIPLNWFENALLTAGAAYMSITDPRRGDMVAALGETTAGPTVSWLRDQMLASPEGRQILKDRPRITSSTVDMDKLAQMPEGTFGRAYINWLERCGVTPDTREPVHYIDDPELAYVMQRYRECHDFYHCICNMPVNVESELAVKYFEFANLGLPMAGLAALFGPLRLNAQKRNWLFTEAVPWALKCGSSARSLITVYWEKRWEEQVEDMKKEFGIWDGPEARWSKPLNEAKEAAERRSKTTQNQIY.

A mitochondrion-targeting transit peptide spans 1-37; it reads MLGRRSVSLLRGLTELPVSSRAHTALRALSVPQTRRN. The Zn(2+) site is built by His-169, Asp-170, His-173, and Glu-185. Residues 271–283 are compositionally biased toward basic and acidic residues; it reads PLNEAKEAAERRS. The interval 271-291 is disordered; it reads PLNEAKEAAERRSKTTQNQIY.

It belongs to the COQ4 family. Component of a multi-subunit COQ enzyme complex, composed of at least COQ3, COQ4, COQ5, COQ6, COQ7 and COQ9. Zn(2+) serves as cofactor.

The protein resides in the mitochondrion inner membrane. It carries out the reaction a 4-hydroxy-3-methoxy-5-(all-trans-polyprenyl)benzoate + H(+) = a 2-methoxy-6-(all-trans-polyprenyl)phenol + CO2. The protein operates within cofactor biosynthesis; ubiquinone biosynthesis. Its function is as follows. Lyase that catalyzes the C1-decarboxylation of 4-hydroxy-3-methoxy-5-(all-trans-polyprenyl)benzoic acid into 2-methoxy-6-(all-trans-polyprenyl)phenol during ubiquinone biosynthesis. The chain is Ubiquinone biosynthesis protein COQ4, mitochondrial from Coprinopsis cinerea (strain Okayama-7 / 130 / ATCC MYA-4618 / FGSC 9003) (Inky cap fungus).